The primary structure comprises 65 residues: Large ribosomal subunit protein uL29 (65 aa).

This sequence belongs to the universal ribosomal protein uL29 family.

The chain is Large ribosomal subunit protein uL29 from Buchnera aphidicola subsp. Schizaphis graminum (strain Sg).